The sequence spans 209 residues: Thiamine-phosphate synthase (209 aa).

Residues 36-40 (QYRDK) and Asn-68 each bind 4-amino-2-methyl-5-(diphosphooxymethyl)pyrimidine. Mg(2+)-binding residues include Asp-69 and Asp-87. Thr-106 lines the 4-amino-2-methyl-5-(diphosphooxymethyl)pyrimidine pocket. 133 to 135 (SST) is a 2-[(2R,5Z)-2-carboxy-4-methylthiazol-5(2H)-ylidene]ethyl phosphate binding site. Lys-136 is a 4-amino-2-methyl-5-(diphosphooxymethyl)pyrimidine binding site. 2-[(2R,5Z)-2-carboxy-4-methylthiazol-5(2H)-ylidene]ethyl phosphate is bound at residue Gly-163.

Belongs to the thiamine-phosphate synthase family. The cofactor is Mg(2+).

It carries out the reaction 2-[(2R,5Z)-2-carboxy-4-methylthiazol-5(2H)-ylidene]ethyl phosphate + 4-amino-2-methyl-5-(diphosphooxymethyl)pyrimidine + 2 H(+) = thiamine phosphate + CO2 + diphosphate. The catalysed reaction is 2-(2-carboxy-4-methylthiazol-5-yl)ethyl phosphate + 4-amino-2-methyl-5-(diphosphooxymethyl)pyrimidine + 2 H(+) = thiamine phosphate + CO2 + diphosphate. It catalyses the reaction 4-methyl-5-(2-phosphooxyethyl)-thiazole + 4-amino-2-methyl-5-(diphosphooxymethyl)pyrimidine + H(+) = thiamine phosphate + diphosphate. The protein operates within cofactor biosynthesis; thiamine diphosphate biosynthesis; thiamine phosphate from 4-amino-2-methyl-5-diphosphomethylpyrimidine and 4-methyl-5-(2-phosphoethyl)-thiazole: step 1/1. Its function is as follows. Condenses 4-methyl-5-(beta-hydroxyethyl)thiazole monophosphate (THZ-P) and 2-methyl-4-amino-5-hydroxymethyl pyrimidine pyrophosphate (HMP-PP) to form thiamine monophosphate (TMP). In Pseudomonas aeruginosa (strain UCBPP-PA14), this protein is Thiamine-phosphate synthase.